We begin with the raw amino-acid sequence, 1231 residues long: Chromosome-associated kinesin KIF4 (1231 aa).

Positions 9 to 337 (PVRVALRCRP…LRYADRARKI (329 aa)) constitute a Kinesin motor domain. 88–95 (GQTGSGKT) is a binding site for ATP. Residues 351-1000 (ELNHLKQQVQ…IKQKLTLLQV (650 aa)) adopt a coiled-coil conformation. Position 395 is a phosphoserine (Ser395). The residue at position 800 (Thr800) is a Phosphothreonine. Phosphoserine occurs at positions 802, 811, and 816. The tract at residues 1001–1231 (ASKQKPHLTR…GCSPIQEESH (231 aa)) is globular. Residues 1189-1212 (HPELKSIASESQENKAIGKKKKRA) are disordered. Phosphoserine is present on residues Ser1224 and Ser1230.

This sequence belongs to the TRAFAC class myosin-kinesin ATPase superfamily. Kinesin family. Chromokinesin subfamily. The cofactor is [2Fe-2S] cluster. [4Fe-4S] cluster serves as cofactor. In terms of tissue distribution, expressed in pyramidal cells in juvenile hippocampus, granular cells in juvenile cerebellar cortex and in adult spleen.

Its subcellular location is the nucleus. It localises to the chromosome. The protein resides in the cytoplasm. It is found in the cytoskeleton. In terms of biological role, iron-sulfur (Fe-S) cluster binding motor protein that has a role in chromosome segregation during mitosis. Required for mitotic chromosomal positioning and bipolar spindle stabilization. This Mus musculus (Mouse) protein is Chromosome-associated kinesin KIF4 (Kif4).